We begin with the raw amino-acid sequence, 157 residues long: Small ribosomal subunit protein uS7 (157 aa).

The protein belongs to the universal ribosomal protein uS7 family. In terms of assembly, part of the 30S ribosomal subunit. Contacts proteins S9 and S11.

Its function is as follows. One of the primary rRNA binding proteins, it binds directly to 16S rRNA where it nucleates assembly of the head domain of the 30S subunit. Is located at the subunit interface close to the decoding center, probably blocks exit of the E-site tRNA. This is Small ribosomal subunit protein uS7 from Francisella philomiragia subsp. philomiragia (strain ATCC 25017 / CCUG 19701 / FSC 153 / O#319-036).